Reading from the N-terminus, the 376-residue chain is Probable inactive protein kinase At3g63330 (376 aa).

The Protein kinase domain maps to 1-370 (MVERGPTVYL…VDEALQHPYF (370 aa)).

The protein belongs to the protein kinase superfamily. Ser/Thr protein kinase family.

This chain is Probable inactive protein kinase At3g63330, found in Arabidopsis thaliana (Mouse-ear cress).